The chain runs to 309 residues: tRNA uridine(34) hydroxylase (309 aa).

The Rhodanese domain maps to 130-224; that stretch reads SDPDTIVIDT…YLEEVPQEES (95 aa). The active-site Cysteine persulfide intermediate is the cysteine 184.

Belongs to the TrhO family.

The catalysed reaction is uridine(34) in tRNA + AH2 + O2 = 5-hydroxyuridine(34) in tRNA + A + H2O. Its function is as follows. Catalyzes oxygen-dependent 5-hydroxyuridine (ho5U) modification at position 34 in tRNAs. The chain is tRNA uridine(34) hydroxylase from Rhizobium etli (strain ATCC 51251 / DSM 11541 / JCM 21823 / NBRC 15573 / CFN 42).